The primary structure comprises 195 residues: Cytochrome b-245 light chain (195 aa).

The Cytoplasmic portion of the chain corresponds to 2–7 (GQIEWA). A helical transmembrane segment spans residues 8–30 (MWANEQALASGLILITGGIVATA). Residues 31–35 (GRFTQ) are Extracellular-facing. A helical membrane pass occupies residues 36-53 (WYFGAYSIVAGVFVCLLE). Residues 54–69 (YPRGKRKKGSTMERWG) lie on the Cytoplasmic side of the membrane. The stretch at 70–80 (QKYMTAVVKLF) is an intramembrane region. Residues 81–86 (GPFTRN) lie on the Cytoplasmic side of the membrane. Residues 87 to 104 (YYVRAVLHLLLSVPAGFL) traverse the membrane as a helical segment. A topological domain (extracellular) is located at residue leucine 105. A helical membrane pass occupies residues 106 to 126 (ATILGTACLAIASGIYLLAAV). Over 127–195 (RGEQWTPIEP…NPIPVTDEVV (69 aa)) the chain is Cytoplasmic. Residues 134–195 (IEPKPRERPQ…NPIPVTDEVV (62 aa)) are disordered. Threonine 147 bears the Phosphothreonine mark. Lysine 149 is covalently cross-linked (Glycyl lysine isopeptide (Lys-Gly) (interchain with G-Cter in ubiquitin)). Phosphoserine is present on serine 168.

It belongs to the p22phox family. In terms of assembly, component of the phagocyte NADPH oxidase core complex/cytochrome b558 complex, composed of CYBB (heavy chain (beta)) and CYBA (light chain (alpha)). Component of the phagocyte NADPH oxidase complex composed of an obligatory core heterodimer formed by the membrane proteins CYBA and CYBB and the cytosolic regulatory subunits NCF1/p47-phox, NCF2/p67-phox, NCF4/p40-phox and the small GTPase RAC1 or RAC2. Interacts with NCF1 (via SH3 domain). Interacts with SH3PXD2A. Interacts with DUOX1, DUOX2 and TPO. Interacts with NOX4; this interaction mediates superoxide generation. Interacts with calprotectin (S100A8/9). Interacts with GBP7. Interacts with NOXO1. Forms a heterodimer with NOX3 and is essential for activity and cell membrane localization of NOX3. Interacts with NOX1. Phosphorylation at Thr-147 enhances NADPH oxidase activity by promoting NCF1/p47-phox binding. Post-translationally, ubiquitinated at Lys-149 likely by RNF145.

The protein resides in the cell membrane. Its function is as follows. Subunit of NADPH oxidase complexes that is required for the NADPH oxidase activity that generates, in various cell types, superoxide from molecular oxygen utilizing NADPH as an electron donor. Subunit of the phagocyte NADPH oxidase complex that mediates the transfer of electrons from cytosolic NADPH to O2 to produce the superoxide anion (O2(-)). In the activated complex, electrons are first transferred from NADPH to flavin adenine dinucleotide (FAD) and subsequently transferred via two heme molecules to molecular oxygen, producing superoxide through an outer-sphere reaction. Activation of the NADPH oxidase complex is initiated by the assembly of cytosolic subunits of the NADPH oxidase complex with the core NADPH oxidase complex to form a complex at the plasma membrane or phagosomal membrane. This activation process is initiated by phosphorylation dependent binding of the cytosolic NCF1/p47-phox subunit to the C-terminus of CYBA/p22-phox. Aassociates with NOX3 to form a functional NADPH oxidase constitutively generating superoxide. This is Cytochrome b-245 light chain from Homo sapiens (Human).